The chain runs to 455 residues: Bifunctional protein GlmU (455 aa).

Residues 1-225 are pyrophosphorylase; that stretch reads MNIVILAAGM…EWETLGVNSK (225 aa). Residues 6-9, Lys20, Gln71, 76-77, 98-100, Gly135, Glu150, Asn165, and Asn223 contribute to the UDP-N-acetyl-alpha-D-glucosamine site; these read LAAG, GT, and YGD. Position 100 (Asp100) interacts with Mg(2+). Asn223 is a binding site for Mg(2+). The linker stretch occupies residues 226–246; sequence VQLAELERIHQRNLAQQLLED. Residues 247–455 are N-acetyltransferase; it reads GVTLIDPARI…QRPVKQKKEG (209 aa). UDP-N-acetyl-alpha-D-glucosamine contacts are provided by Arg329 and Lys347. The active-site Proton acceptor is His359. 2 residues coordinate UDP-N-acetyl-alpha-D-glucosamine: Tyr362 and Asn373. Acetyl-CoA is bound by residues Ala376, 382–383, Ser401, Ala419, and Arg436; that span reads NY.

In the N-terminal section; belongs to the N-acetylglucosamine-1-phosphate uridyltransferase family. This sequence in the C-terminal section; belongs to the transferase hexapeptide repeat family. Homotrimer. Mg(2+) serves as cofactor.

It is found in the cytoplasm. The catalysed reaction is alpha-D-glucosamine 1-phosphate + acetyl-CoA = N-acetyl-alpha-D-glucosamine 1-phosphate + CoA + H(+). The enzyme catalyses N-acetyl-alpha-D-glucosamine 1-phosphate + UTP + H(+) = UDP-N-acetyl-alpha-D-glucosamine + diphosphate. The protein operates within nucleotide-sugar biosynthesis; UDP-N-acetyl-alpha-D-glucosamine biosynthesis; N-acetyl-alpha-D-glucosamine 1-phosphate from alpha-D-glucosamine 6-phosphate (route II): step 2/2. It participates in nucleotide-sugar biosynthesis; UDP-N-acetyl-alpha-D-glucosamine biosynthesis; UDP-N-acetyl-alpha-D-glucosamine from N-acetyl-alpha-D-glucosamine 1-phosphate: step 1/1. It functions in the pathway bacterial outer membrane biogenesis; LPS lipid A biosynthesis. Its function is as follows. Catalyzes the last two sequential reactions in the de novo biosynthetic pathway for UDP-N-acetylglucosamine (UDP-GlcNAc). The C-terminal domain catalyzes the transfer of acetyl group from acetyl coenzyme A to glucosamine-1-phosphate (GlcN-1-P) to produce N-acetylglucosamine-1-phosphate (GlcNAc-1-P), which is converted into UDP-GlcNAc by the transfer of uridine 5-monophosphate (from uridine 5-triphosphate), a reaction catalyzed by the N-terminal domain. The sequence is that of Bifunctional protein GlmU from Ralstonia pickettii (strain 12J).